The primary structure comprises 400 residues: Phosphoglycerate kinase (400 aa).

Residues 21-23 (DFN), arginine 36, 59-62 (HCSR), arginine 118, and arginine 151 each bind substrate. ATP is bound by residues lysine 201, glutamate 323, and 353–356 (GGDT).

The protein belongs to the phosphoglycerate kinase family. As to quaternary structure, monomer.

Its subcellular location is the cytoplasm. It catalyses the reaction (2R)-3-phosphoglycerate + ATP = (2R)-3-phospho-glyceroyl phosphate + ADP. It functions in the pathway carbohydrate degradation; glycolysis; pyruvate from D-glyceraldehyde 3-phosphate: step 2/5. The polypeptide is Phosphoglycerate kinase (Bartonella bacilliformis (strain ATCC 35685 / KC583 / Herrer 020/F12,63)).